The sequence spans 293 residues: Ethanolamine ammonia-lyase small subunit (293 aa).

2 residues coordinate adenosylcob(III)alamin: Val207 and Glu228.

Belongs to the EutC family. The basic unit is a heterodimer which dimerizes to form tetramers. The heterotetramers trimerize; 6 large subunits form a core ring with 6 small subunits projecting outwards. Adenosylcob(III)alamin serves as cofactor.

Its subcellular location is the bacterial microcompartment. It catalyses the reaction ethanolamine = acetaldehyde + NH4(+). It participates in amine and polyamine degradation; ethanolamine degradation. Its function is as follows. Catalyzes the deamination of various vicinal amino-alcohols to oxo compounds. Allows this organism to utilize ethanolamine as the sole source of nitrogen and carbon in the presence of external vitamin B12. This is Ethanolamine ammonia-lyase small subunit from Listeria monocytogenes serotype 4b (strain CLIP80459).